Reading from the N-terminus, the 209-residue chain is MKDVREEYHADGLIEATLHDDPLEQARRWVDEAIEAELPLPNAITLATVSANGQPSSRVVLLKGIENQGFTFFTHYDSRKGEEIAANPKVSFTMFWQPFDRQMIVIGEAQKVDQEESDSYFASRPYASQVSAAISPQSRPASREWLEAEVSRLEQEFPSAPVPRPEQWGGYRIIPTEIQFWHGRPSRLHDRFRYVKQGDGCWQRERLAP.

Substrate contacts are provided by residues 5–8 (REEY) and K63. Residues 58–63 (RVVLLK), 73–74 (FT), R79, K80, and Q102 each bind FMN. Substrate contacts are provided by Y120, R124, and S128. FMN is bound by residues 137 to 138 (QS) and W181. Position 187-189 (187-189 (RLH)) interacts with substrate. R191 contributes to the FMN binding site.

The protein belongs to the pyridoxamine 5'-phosphate oxidase family. Homodimer. Requires FMN as cofactor.

The enzyme catalyses pyridoxamine 5'-phosphate + O2 + H2O = pyridoxal 5'-phosphate + H2O2 + NH4(+). The catalysed reaction is pyridoxine 5'-phosphate + O2 = pyridoxal 5'-phosphate + H2O2. Its pathway is cofactor metabolism; pyridoxal 5'-phosphate salvage; pyridoxal 5'-phosphate from pyridoxamine 5'-phosphate: step 1/1. It functions in the pathway cofactor metabolism; pyridoxal 5'-phosphate salvage; pyridoxal 5'-phosphate from pyridoxine 5'-phosphate: step 1/1. Functionally, catalyzes the oxidation of either pyridoxine 5'-phosphate (PNP) or pyridoxamine 5'-phosphate (PMP) into pyridoxal 5'-phosphate (PLP). The protein is Pyridoxine/pyridoxamine 5'-phosphate oxidase of Alcanivorax borkumensis (strain ATCC 700651 / DSM 11573 / NCIMB 13689 / SK2).